The sequence spans 330 residues: Peptide transport system ATP-binding protein SapD (330 aa).

The ABC transporter domain occupies 6-259; the sequence is IRNLTIEFKT…PHHPYTQALI (254 aa). Residue 40–47 participates in ATP binding; that stretch reads GESGSGKS.

Belongs to the ABC transporter superfamily.

It localises to the cell inner membrane. Its function is as follows. Involved in a peptide intake transport system that plays a role in the resistance to antimicrobial peptides. This chain is Peptide transport system ATP-binding protein SapD, found in Salmonella typhimurium (strain LT2 / SGSC1412 / ATCC 700720).